Consider the following 177-residue polypeptide: Phycocyanin-645 beta chain (177 aa).

Tyrosine 18 is a binding site for mesobiliverdin. Positions 28, 35, and 39 each coordinate (2R,3E)-phycocyanobilin. Residues cysteine 50, aspartate 54, and cysteine 61 each coordinate 15,16-dihydrobiliverdin. Positions 77, 82, 84, and 85 each coordinate (2R,3E)-phycocyanobilin. Glutamine 148 lines the 15,16-dihydrobiliverdin pocket. Residues proline 154, glycine 156, and cysteine 158 each contribute to the (2R,3E)-phycocyanobilin site.

The protein belongs to the phycobiliprotein family. As to quaternary structure, heterotetramer of 2 different alpha chains and 2 identical beta chains which form 2 alpha-beta heterodimers within the heterotetramer. In terms of processing, contains two phycocyanobilin chromophores, one mesobiliverdin chromophore and one 15,16-dihydrobiliverdin chromophore with binding mediated by both the alpha and beta subunits.

Its subcellular location is the plastid. It is found in the chloroplast thylakoid membrane. Its function is as follows. Light-harvesting photosynthetic tetrapyrrole chromophore-protein from the phycobiliprotein complex. The sequence is that of Phycocyanin-645 beta chain from Chroomonas sp.